We begin with the raw amino-acid sequence, 584 residues long: Tricyclene synthase 1e20, chloroplastic (584 aa).

A chloroplast-targeting transit peptide spans 1 to 45 (MIYIWICFYLQTTLLPCSLSTRTKFAICHNTSKLHRAAYKTSRWN). Residues Asn-30, Asn-209, and Asn-322 are each glycosylated (N-linked (GlcNAc...) asparagine). 2 residues coordinate Mg(2+): Asp-341 and Asp-345. Positions 341–345 (DDIFD) match the DDXXD motif motif. N-linked (GlcNAc...) asparagine glycans are attached at residues Asn-387 and Asn-468. Positions 485, 489, and 493 each coordinate Mg(2+). Asn-512 is a glycosylation site (N-linked (GlcNAc...) asparagine).

The protein belongs to the terpene synthase family. Tpsg subfamily. The cofactor is Mg(2+). Mn(2+) is required as a cofactor. In terms of tissue distribution, accumulates at low levels in flowers; mostly expressed in both upper and lower petal lobes, and, to a lower extent, in tube and stamens.

It localises to the plastid. Its subcellular location is the chloroplast stroma. It catalyses the reaction (2E)-geranyl diphosphate = tricyclene + diphosphate. The catalysed reaction is (2E)-geranyl diphosphate = beta-myrcene + diphosphate. It functions in the pathway secondary metabolite biosynthesis; terpenoid biosynthesis. Its function is as follows. May contribute to floral scent emission. The sequence is that of Tricyclene synthase 1e20, chloroplastic (1e20) from Antirrhinum majus (Garden snapdragon).